The following is a 235-amino-acid chain: Putative N-acetylmannosamine-6-phosphate 2-epimerase (235 aa).

It belongs to the NanE family.

The catalysed reaction is an N-acyl-D-glucosamine 6-phosphate = an N-acyl-D-mannosamine 6-phosphate. The protein operates within amino-sugar metabolism; N-acetylneuraminate degradation; D-fructose 6-phosphate from N-acetylneuraminate: step 3/5. Functionally, converts N-acetylmannosamine-6-phosphate (ManNAc-6-P) to N-acetylglucosamine-6-phosphate (GlcNAc-6-P). In Enterobacter sp. (strain 638), this protein is Putative N-acetylmannosamine-6-phosphate 2-epimerase.